Reading from the N-terminus, the 175-residue chain is NADH-ubiquinone oxidoreductase chain 6 (175 aa).

5 consecutive transmembrane segments (helical) span residues 1 to 21 (MVTYIVFVLSIIFVISFVGVS), 25 to 45 (SPIYGGLGLIVGGGAGCGVVL), 47 to 67 (FGGSFLGLMVFLIYLGGMLVV), 88 to 108 (VVLGAFILGLVVESLIVIYAL), and 149 to 169 (YGVWLVIVTGWSLFVSVVIIM).

It belongs to the complex I subunit 6 family. In terms of assembly, core subunit of respiratory chain NADH dehydrogenase (Complex I) which is composed of 45 different subunits.

Its subcellular location is the mitochondrion inner membrane. The catalysed reaction is a ubiquinone + NADH + 5 H(+)(in) = a ubiquinol + NAD(+) + 4 H(+)(out). Core subunit of the mitochondrial membrane respiratory chain NADH dehydrogenase (Complex I) which catalyzes electron transfer from NADH through the respiratory chain, using ubiquinone as an electron acceptor. Essential for the catalytic activity and assembly of complex I. The sequence is that of NADH-ubiquinone oxidoreductase chain 6 (MT-ND6) from Balaenoptera musculus (Blue whale).